Consider the following 376-residue polypeptide: Chaperone protein DnaJ (376 aa).

The 66-residue stretch at 5–70 (DYYEILGVSK…QKRAAYDQYG (66 aa)) folds into the J domain. The CR-type zinc finger occupies 131–209 (GVTKEIRIPT…CHGHGRVERS (79 aa)). The Zn(2+) site is built by C144, C147, C161, C164, C183, C186, C197, and C200. 4 CXXCXGXG motif repeats span residues 144–151 (CDVCHGSG), 161–168 (CPTCHGSG), 183–190 (CPHCQGRG), and 197–204 (CNKCHGHG).

Belongs to the DnaJ family. In terms of assembly, homodimer. Zn(2+) is required as a cofactor.

The protein localises to the cytoplasm. Participates actively in the response to hyperosmotic and heat shock by preventing the aggregation of stress-denatured proteins and by disaggregating proteins, also in an autonomous, DnaK-independent fashion. Unfolded proteins bind initially to DnaJ; upon interaction with the DnaJ-bound protein, DnaK hydrolyzes its bound ATP, resulting in the formation of a stable complex. GrpE releases ADP from DnaK; ATP binding to DnaK triggers the release of the substrate protein, thus completing the reaction cycle. Several rounds of ATP-dependent interactions between DnaJ, DnaK and GrpE are required for fully efficient folding. Also involved, together with DnaK and GrpE, in the DNA replication of plasmids through activation of initiation proteins. The polypeptide is Chaperone protein DnaJ (Shigella boydii serotype 18 (strain CDC 3083-94 / BS512)).